Consider the following 873-residue polypeptide: Coatomer subunit gamma-2 (873 aa).

Over residues 1–11 the composition is skewed to basic and acidic residues; that stretch reads MIKKFDKKDEE. A disordered region spans residues 1 to 21; the sequence is MIKKFDKKDEESGSGSNPFQN. HEAT repeat units lie at residues 64 to 101, 283 to 320, 321 to 355, 356 to 392, 394 to 430, and 467 to 504; these read TEATEAFFAMTRLFQSNDQTLRRMCYLTIKEMANISED, RELAPAVSVLQLFCSSPKAALRYAAVRTLNKVAMKHPS, AVTACNLDLENLITDSNRSIATLAITTLLKTGSES, SVDRLMKQISSFVSEISDEFKVVVVQAISALCQKYPR, HSAMMNFLSNMLRDDGGFEYKRAIVDCIISIIEENPE, and PQPSKYIRFIFNRVVLESEAVRAAAVSALAKFGAQNDD.

It belongs to the COPG family. In terms of assembly, oligomeric complex.

It is found in the cytoplasm. Its subcellular location is the golgi apparatus membrane. The protein resides in the cytoplasmic vesicle. It localises to the COPI-coated vesicle membrane. In terms of biological role, the coatomer is a cytosolic protein complex that binds to dilysine motifs and reversibly associates with Golgi non-clathrin-coated vesicles, which further mediate biosynthetic protein transport from the ER, via the Golgi up to the trans Golgi network. Coatomer complex is required for budding from Golgi membranes, and is essential for the retrograde Golgi-to-ER transport of dilysine-tagged proteins. The chain is Coatomer subunit gamma-2 (copg2) from Takifugu rubripes (Japanese pufferfish).